We begin with the raw amino-acid sequence, 481 residues long: UDP-N-acetylmuramoyl-L-alanyl-D-glutamate--L-lysine ligase (481 aa).

S42 contributes to the UDP-N-acetyl-alpha-D-muramoyl-L-alanyl-D-glutamate binding site. 118–124 is a binding site for ATP; the sequence is GTKGKTT. Residues N158, 160–161, S187, and R195 contribute to the UDP-N-acetyl-alpha-D-muramoyl-L-alanyl-D-glutamate site; that span reads TT. Residue K229 is modified to N6-carboxylysine. An L-lysine recognition motif motif is present at residues 404–407; the sequence is DDPN.

It belongs to the MurCDEF family. MurE subfamily. In terms of processing, carboxylation is probably crucial for Mg(2+) binding and, consequently, for the gamma-phosphate positioning of ATP.

It is found in the cytoplasm. It carries out the reaction UDP-N-acetyl-alpha-D-muramoyl-L-alanyl-D-glutamate + L-lysine + ATP = UDP-N-acetyl-alpha-D-muramoyl-L-alanyl-gamma-D-glutamyl-L-lysine + ADP + phosphate + H(+). It functions in the pathway cell wall biogenesis; peptidoglycan biosynthesis. In terms of biological role, catalyzes the addition of L-lysine to the nucleotide precursor UDP-N-acetylmuramoyl-L-alanyl-D-glutamate (UMAG) in the biosynthesis of bacterial cell-wall peptidoglycan. The chain is UDP-N-acetylmuramoyl-L-alanyl-D-glutamate--L-lysine ligase from Streptococcus thermophilus (strain ATCC BAA-491 / LMD-9).